Here is a 422-residue protein sequence, read N- to C-terminus: Inner membrane ALBINO3-like protein 2, chloroplastic (422 aa).

Residues 1 to 10 (MALQMKQSPS) are compositionally biased toward polar residues. The disordered stretch occupies residues 1 to 22 (MALQMKQSPSMGVRRASQPVLP). The helical transmembrane segment at 65 to 85 (LYTLAEGGPIDVLAQFFEFVL) threads the bilayer. Residues 86-96 (QTLDEGLESAK) lie on the Stromal side of the membrane. A helical transmembrane segment spans residues 97–117 (IPYSYGFAIIALTVLVKVATF). Residues 118 to 166 (PLTQKQVESTLSLQALQPRVKELQAKYADDPENLQLETARLYKEAGVNP) are Lumenal-facing. The helical transmembrane segment at 167-187 (LAGCFPTLATIPVFIGLYNAL) threads the bilayer. Topologically, residues 188–225 (SNAAKEGLLTEGFFWIPSLGGPTTIGGGLEWLVPFENG) are stromal. A helical transmembrane segment spans residues 226–246 (APPVGWANAAAYLVMPVLLVA). The Lumenal segment spans residues 247-275 (SQYASQKIISSQNNQDPSQQQAQAILKFL). Residues 276-296 (PLMIGWFSLNVPSGLTLYWFV) traverse the membrane as a helical segment. Residues 297–422 (NNLLSTGQQL…GSEEGKDNSA (126 aa)) lie on the Stromal side of the membrane. The tract at residues 325-422 (TAGSSTPIVK…GSEEGKDNSA (98 aa)) is disordered. A compositionally biased stretch (basic and acidic residues) spans 334-350 (KPKEERVKKVTGKELGS). Residues 358–367 (DGEEVEDVEV) show a composition bias toward acidic residues. The segment covering 368-380 (EVVSSGSSSSSGS) has biased composition (low complexity). Residues 386-400 (RKGEKFRALKAREAA) show a composition bias toward basic and acidic residues.

It belongs to the OXA1/ALB3/YidC (TC 2.A.9.2) family.

It localises to the plastid. The protein resides in the chloroplast thylakoid membrane. Functionally, required for the insertion of some light-harvesting complexes (LHC) proteins into the chloroplast thylakoid membrane. Essential for the assembly and activity of LHC I and II. Its function is probably partly distinct from that of ALB3.1. This Chlamydomonas reinhardtii (Chlamydomonas smithii) protein is Inner membrane ALBINO3-like protein 2, chloroplastic (ALB3.2).